Reading from the N-terminus, the 264-residue chain is Exodeoxyribonuclease YycJ (264 aa).

The a divalent metal cation site is built by H58, H60, D62, H63, and D145.

Belongs to the metallo-beta-lactamase superfamily. Fe(2+) serves as cofactor. It depends on Zn(2+) as a cofactor. Requires Mn(2+) as cofactor.

In terms of biological role, 5'-&gt;3' double-stranded DNA exonuclease. May play a role in mutation mismatch repair (MMR). Required for accurate coordination of cell division with DNA replication. May play a role in cell wall metabolism. This Bacillus anthracis protein is Exodeoxyribonuclease YycJ.